The chain runs to 79 residues: ATP synthase subunit c (79 aa).

2 consecutive transmembrane segments (helical) span residues 11 to 31 (MAAAVMMGLAAIGAAIGIGIL) and 53 to 73 (FFIVMGLVDAIPMIAVGLGLY).

It belongs to the ATPase C chain family. As to quaternary structure, F-type ATPases have 2 components, F(1) - the catalytic core - and F(0) - the membrane proton channel. F(1) has five subunits: alpha(3), beta(3), gamma(1), delta(1), epsilon(1). F(0) has three main subunits: a(1), b(2) and c(10-14). The alpha and beta chains form an alternating ring which encloses part of the gamma chain. F(1) is attached to F(0) by a central stalk formed by the gamma and epsilon chains, while a peripheral stalk is formed by the delta and b chains.

The protein localises to the cell inner membrane. Its function is as follows. F(1)F(0) ATP synthase produces ATP from ADP in the presence of a proton or sodium gradient. F-type ATPases consist of two structural domains, F(1) containing the extramembraneous catalytic core and F(0) containing the membrane proton channel, linked together by a central stalk and a peripheral stalk. During catalysis, ATP synthesis in the catalytic domain of F(1) is coupled via a rotary mechanism of the central stalk subunits to proton translocation. Key component of the F(0) channel; it plays a direct role in translocation across the membrane. A homomeric c-ring of between 10-14 subunits forms the central stalk rotor element with the F(1) delta and epsilon subunits. In Citrobacter koseri (strain ATCC BAA-895 / CDC 4225-83 / SGSC4696), this protein is ATP synthase subunit c.